Consider the following 348-residue polypeptide: D-alanine--D-alanine ligase (348 aa).

The ATP-grasp domain maps to 132-334; sequence KRVLESIGIP…YPDLIEELVT (203 aa). Residue 162–217 participates in ATP binding; it reads LARLTFPIFVKPANMGSSVGISKAQTKVELRKAIQLALTYDSRVLIEQGVIAREIE. Mg(2+) is bound by residues Asp288, Glu301, and Asn303.

Belongs to the D-alanine--D-alanine ligase family. It depends on Mg(2+) as a cofactor. Requires Mn(2+) as cofactor.

The protein resides in the cytoplasm. The catalysed reaction is 2 D-alanine + ATP = D-alanyl-D-alanine + ADP + phosphate + H(+). Its pathway is cell wall biogenesis; peptidoglycan biosynthesis. Its function is as follows. Cell wall formation. This chain is D-alanine--D-alanine ligase, found in Streptococcus pyogenes serotype M4 (strain MGAS10750).